Here is a 380-residue protein sequence, read N- to C-terminus: GTP-binding protein 10 (380 aa).

Residues 13–148 enclose the Obg domain; sequence GNFVDNVRLY…RNIRLDLKLI (136 aa). The OBG-type G domain occupies 149–344; it reads ADFGLVGFPN…LKSLIRQSLE (196 aa). GTP is bound by residues 155-162, 202-206, and 278-281; these read GFPNAGKS, DLPGL, and NKMD.

Belongs to the TRAFAC class OBG-HflX-like GTPase superfamily. OBG GTPase family.

It is found in the nucleus. The protein localises to the nucleolus. Its function is as follows. May be involved in the ribosome maturation process. In Danio rerio (Zebrafish), this protein is GTP-binding protein 10 (gtpbp10).